Here is a 340-residue protein sequence, read N- to C-terminus: Tryptophan--tRNA ligase (340 aa).

Residues 11-13 (RPT) and 19-20 (GH) contribute to the ATP site. Residues 12–20 (PTGKLHLGH) carry the 'HIGH' region motif. Position 140 (aspartate 140) interacts with L-tryptophan. ATP-binding positions include 152 to 154 (GND), leucine 194, and 202 to 206 (KMSKS). The short motif at 202 to 206 (KMSKS) is the 'KMSKS' region element.

Belongs to the class-I aminoacyl-tRNA synthetase family. In terms of assembly, homodimer.

The protein localises to the cytoplasm. The enzyme catalyses tRNA(Trp) + L-tryptophan + ATP = L-tryptophyl-tRNA(Trp) + AMP + diphosphate + H(+). Functionally, catalyzes the attachment of tryptophan to tRNA(Trp). The protein is Tryptophan--tRNA ligase of Streptococcus pyogenes serotype M1.